A 258-amino-acid polypeptide reads, in one-letter code: Serine protease sp-Eoc49 (258 aa).

Residues 1–18 (MVLIRVLANLLVLQLSYA) form the signal peptide. Residues 25–249 (VVGGGECNRN…YTDWIQSIIA (225 aa)) form the Peptidase S1 domain. Asparagine 44 carries an N-linked (GlcNAc...) asparagine glycan. Cysteine 50 and cysteine 66 are joined by a disulfide. The Charge relay system role is filled by histidine 65. 2 N-linked (GlcNAc...) asparagine glycosylation sites follow: asparagine 79 and asparagine 103. The active-site Charge relay system is the aspartate 110. Disulfide bonds link cysteine 142–cysteine 210, cysteine 174–cysteine 189, and cysteine 200–cysteine 225. The N-linked (GlcNAc...) asparagine glycan is linked to asparagine 154. Serine 204 (charge relay system) is an active-site residue. Asparagine 251 carries an N-linked (GlcNAc...) asparagine glycan.

It belongs to the peptidase S1 family. Snake venom subfamily. Monomer. In terms of tissue distribution, expressed by the venom gland.

It localises to the secreted. Functionally, snake venom serine protease that may act in the hemostasis system of the prey. The protein is Serine protease sp-Eoc49 of Echis ocellatus (Ocellated saw-scaled viper).